A 553-amino-acid chain; its full sequence is Phenylalanine--tRNA ligase alpha subunit (553 aa).

L-phenylalanine is bound by residues Thr-400 and Phe-479. Glu-481 lines the Mg(2+) pocket.

The protein belongs to the class-II aminoacyl-tRNA synthetase family. Phe-tRNA synthetase alpha subunit type 2 subfamily. In terms of assembly, tetramer of two alpha and two beta subunits. Mg(2+) serves as cofactor.

It is found in the cytoplasm. The catalysed reaction is tRNA(Phe) + L-phenylalanine + ATP = L-phenylalanyl-tRNA(Phe) + AMP + diphosphate + H(+). This is Phenylalanine--tRNA ligase alpha subunit from Treponema pallidum (strain Nichols).